Consider the following 177-residue polypeptide: ATP-dependent protease subunit HslV (177 aa).

Residue T6 is part of the active site. Na(+) contacts are provided by G161, C164, and T167.

The protein belongs to the peptidase T1B family. HslV subfamily. In terms of assembly, a double ring-shaped homohexamer of HslV is capped on each side by a ring-shaped HslU homohexamer. The assembly of the HslU/HslV complex is dependent on binding of ATP.

It localises to the cytoplasm. It catalyses the reaction ATP-dependent cleavage of peptide bonds with broad specificity.. Allosterically activated by HslU binding. Its function is as follows. Protease subunit of a proteasome-like degradation complex believed to be a general protein degrading machinery. This Petrotoga mobilis (strain DSM 10674 / SJ95) protein is ATP-dependent protease subunit HslV.